Reading from the N-terminus, the 645-residue chain is Synaptotagmin-16 (645 aa).

Disordered stretches follow at residues 102–121, 144–192, and 206–344; these read AQNSSPSLSQHAKDSCSTMS, EHHL…DSDE, and QSFR…PSGV. Residues 167-177 show a composition bias toward polar residues; it reads ETVNGKKQVNS. Residues 179–192 show a composition bias toward acidic residues; the sequence is GDDEELSTSSDSDE. A compositionally biased stretch (polar residues) spans 287 to 303; the sequence is HQESSVVQSLRRQSTEG. Positions 350–469 constitute a C2 1 domain; sequence KCGDLDVIFE…HPEGEMKVTL (120 aa). A disordered region spans residues 478–503; it reads SSGGSPLSPSAVSHSDSTSSTQSLSH. Positions 485–502 are enriched in low complexity; sequence SPSAVSHSDSTSSTQSLS. Residues 505–640 enclose the C2 2 domain; it reads GAPELLVGLS…TKGQQICRWH (136 aa).

The protein belongs to the synaptotagmin family. In terms of assembly, homodimer. Can also form heterodimers. As to expression, expressed in brain.

Its function is as follows. May be involved in the trafficking and exocytosis of secretory vesicles in non-neuronal tissues. Is Ca(2+)-independent. The protein is Synaptotagmin-16 (SYT16) of Homo sapiens (Human).